We begin with the raw amino-acid sequence, 115 residues long: Cytochrome c (115 aa).

Positions 26, 29, 30, and 91 each coordinate heme c.

Belongs to the cytochrome c family. Post-translationally, binds 1 heme c group covalently per subunit.

Its subcellular location is the mitochondrion intermembrane space. Functionally, electron carrier protein. The oxidized form of the cytochrome c heme group can accept an electron from the heme group of the cytochrome c1 subunit of cytochrome reductase. Cytochrome c then transfers this electron to the cytochrome oxidase complex, the final protein carrier in the mitochondrial electron-transport chain. The protein is Cytochrome c of Theileria parva (East coast fever infection agent).